The primary structure comprises 149 residues: Transcriptional repressor NrdR (149 aa).

A zinc finger lies at 3–34 (CPFCFAVDTKVIDSRLVGGGSSVRRRRQCLVC). Residues 49-139 (PRVVKSNDVR…VYRSFEDIKE (91 aa)) enclose the ATP-cone domain.

It belongs to the NrdR family. It depends on Zn(2+) as a cofactor.

In terms of biological role, negatively regulates transcription of bacterial ribonucleotide reductase nrd genes and operons by binding to NrdR-boxes. In Shigella boydii serotype 18 (strain CDC 3083-94 / BS512), this protein is Transcriptional repressor NrdR.